Consider the following 307-residue polypeptide: Holliday junction branch migration complex subunit RuvB (307 aa).

Residues 1–167 (MKLQIKPPNT…FGVILNINYY (167 aa)) are large ATPase domain (RuvB-L). I5, G48, K51, T52, T53, R157, Y167, and R204 together coordinate ATP. T52 is a Mg(2+) binding site. A small ATPAse domain (RuvB-S) region spans residues 168–233 (SNAEIEKMVS…DLEGLFKNLM (66 aa)). The tract at residues 236–307 (KNGLQSIDVQ…NSGREYLVNF (72 aa)) is head domain (RuvB-H). DNA-binding residues include R270, K289, and R294.

The protein belongs to the RuvB family. As to quaternary structure, homohexamer. Forms an RuvA(8)-RuvB(12)-Holliday junction (HJ) complex. HJ DNA is sandwiched between 2 RuvA tetramers; dsDNA enters through RuvA and exits via RuvB. An RuvB hexamer assembles on each DNA strand where it exits the tetramer. Each RuvB hexamer is contacted by two RuvA subunits (via domain III) on 2 adjacent RuvB subunits; this complex drives branch migration. In the full resolvosome a probable DNA-RuvA(4)-RuvB(12)-RuvC(2) complex forms which resolves the HJ.

The protein localises to the cytoplasm. It carries out the reaction ATP + H2O = ADP + phosphate + H(+). Its function is as follows. The RuvA-RuvB-RuvC complex processes Holliday junction (HJ) DNA during genetic recombination and DNA repair, while the RuvA-RuvB complex plays an important role in the rescue of blocked DNA replication forks via replication fork reversal (RFR). RuvA specifically binds to HJ cruciform DNA, conferring on it an open structure. The RuvB hexamer acts as an ATP-dependent pump, pulling dsDNA into and through the RuvAB complex. RuvB forms 2 homohexamers on either side of HJ DNA bound by 1 or 2 RuvA tetramers; 4 subunits per hexamer contact DNA at a time. Coordinated motions by a converter formed by DNA-disengaged RuvB subunits stimulates ATP hydrolysis and nucleotide exchange. Immobilization of the converter enables RuvB to convert the ATP-contained energy into a lever motion, pulling 2 nucleotides of DNA out of the RuvA tetramer per ATP hydrolyzed, thus driving DNA branch migration. The RuvB motors rotate together with the DNA substrate, which together with the progressing nucleotide cycle form the mechanistic basis for DNA recombination by continuous HJ branch migration. Branch migration allows RuvC to scan DNA until it finds its consensus sequence, where it cleaves and resolves cruciform DNA. This chain is Holliday junction branch migration complex subunit RuvB, found in Mycoplasma genitalium (strain ATCC 33530 / DSM 19775 / NCTC 10195 / G37) (Mycoplasmoides genitalium).